Reading from the N-terminus, the 341-residue chain is UDP-3-O-acylglucosamine N-acyltransferase 2 (341 aa).

Histidine 254 serves as the catalytic Proton acceptor.

It belongs to the transferase hexapeptide repeat family. LpxD subfamily. As to quaternary structure, homotrimer.

The enzyme catalyses a UDP-3-O-[(3R)-3-hydroxyacyl]-alpha-D-glucosamine + a (3R)-hydroxyacyl-[ACP] = a UDP-2-N,3-O-bis[(3R)-3-hydroxyacyl]-alpha-D-glucosamine + holo-[ACP] + H(+). It functions in the pathway bacterial outer membrane biogenesis; LPS lipid A biosynthesis. Its function is as follows. Catalyzes the N-acylation of UDP-3-O-acylglucosamine using 3-hydroxyacyl-ACP as the acyl donor. Is involved in the biosynthesis of lipid A, a phosphorylated glycolipid that anchors the lipopolysaccharide to the outer membrane of the cell. This chain is UDP-3-O-acylglucosamine N-acyltransferase 2, found in Nitrobacter winogradskyi (strain ATCC 25391 / DSM 10237 / CIP 104748 / NCIMB 11846 / Nb-255).